Reading from the N-terminus, the 235-residue chain is Heme oxygenase (235 aa).

Residue H19 participates in heme b binding.

It belongs to the heme oxygenase family.

It is found in the plastid. The protein localises to the chloroplast. It catalyses the reaction heme b + 3 reduced [NADPH--hemoprotein reductase] + 3 O2 = biliverdin IXalpha + CO + Fe(2+) + 3 oxidized [NADPH--hemoprotein reductase] + 3 H2O + H(+). Its function is as follows. Catalyzes the opening of the heme ring with the release of iron. Key enzyme in the synthesis of the chromophoric part of the photosynthetic antennae. In Rhodella violacea (Red alga), this protein is Heme oxygenase (pbsA).